Here is a 136-residue protein sequence, read N- to C-terminus: Nucleoside diphosphate kinase (136 aa).

ATP-binding residues include Lys-10, Phe-58, Arg-86, Thr-92, Arg-104, and Asn-114. His-117 serves as the catalytic Pros-phosphohistidine intermediate.

Belongs to the NDK family. In terms of assembly, homotetramer. The cofactor is Mg(2+).

Its subcellular location is the cytoplasm. The catalysed reaction is a 2'-deoxyribonucleoside 5'-diphosphate + ATP = a 2'-deoxyribonucleoside 5'-triphosphate + ADP. It catalyses the reaction a ribonucleoside 5'-diphosphate + ATP = a ribonucleoside 5'-triphosphate + ADP. Its function is as follows. Major role in the synthesis of nucleoside triphosphates other than ATP. The ATP gamma phosphate is transferred to the NDP beta phosphate via a ping-pong mechanism, using a phosphorylated active-site intermediate. The polypeptide is Nucleoside diphosphate kinase (Mycobacterium leprae (strain TN)).